An 84-amino-acid polypeptide reads, in one-letter code: U8-theraphotoxin-Hhn1e (84 aa).

The first 21 residues, 1–21 (MKVVLLVCLVWMMAMMELVSC), serve as a signal peptide directing secretion. Intrachain disulfides connect C23–C35, C29–C44, C34–C67, C54–C75, and C69–C81.

This sequence belongs to the AVIT (prokineticin) family. Expressed by the venom gland.

It is found in the secreted. The chain is U8-theraphotoxin-Hhn1e from Cyriopagopus hainanus (Chinese bird spider).